The following is a 66-amino-acid chain: DNA-directed RNA polymerase subunit Rpo10 (66 aa).

The Zn(2+) site is built by Cys7, Cys10, Cys47, and Cys48.

Belongs to the archaeal Rpo10/eukaryotic RPB10 RNA polymerase subunit family. As to quaternary structure, part of the RNA polymerase complex. Requires Zn(2+) as cofactor.

It is found in the cytoplasm. The enzyme catalyses RNA(n) + a ribonucleoside 5'-triphosphate = RNA(n+1) + diphosphate. Functionally, DNA-dependent RNA polymerase (RNAP) catalyzes the transcription of DNA into RNA using the four ribonucleoside triphosphates as substrates. The chain is DNA-directed RNA polymerase subunit Rpo10 from Halobacterium salinarum (strain ATCC 29341 / DSM 671 / R1).